Consider the following 369-residue polypeptide: Superinfection exclusion protein (369 aa).

The N-terminal stretch at 1–15 (MIALLILSLTCSAST) is a signal peptide.

It belongs to the serpin family. Orthopoxvirus OPG040 subfamily. Interacts with A56 protein.

Its subcellular location is the virion membrane. The protein resides in the host cell membrane. Its function is as follows. Prevents cell to cell fusion via its interaction with A56 protein. The A56-K2 complex associates with components of the entry fusion complex (EFC) presumably to avoid superinfection and syncytium formation. In Vaccinia virus (strain Ankara) (VACV), this protein is Superinfection exclusion protein (OPG040).